The sequence spans 261 residues: Glutamate racemase (261 aa).

Residues 12-13 (DS) and 44-45 (YG) each bind substrate. Residue C76 is the Proton donor/acceptor of the active site. 77–78 (NT) serves as a coordination point for substrate. Residue C180 is the Proton donor/acceptor of the active site. 181-182 (TH) is a substrate binding site.

This sequence belongs to the aspartate/glutamate racemases family.

The enzyme catalyses L-glutamate = D-glutamate. Its pathway is cell wall biogenesis; peptidoglycan biosynthesis. Provides the (R)-glutamate required for cell wall biosynthesis. The protein is Glutamate racemase of Borreliella burgdorferi (strain ATCC 35210 / DSM 4680 / CIP 102532 / B31) (Borrelia burgdorferi).